The sequence spans 134 residues: Ribosome-binding factor A (134 aa).

This sequence belongs to the RbfA family. As to quaternary structure, monomer. Binds 30S ribosomal subunits, but not 50S ribosomal subunits or 70S ribosomes.

It is found in the cytoplasm. Its function is as follows. One of several proteins that assist in the late maturation steps of the functional core of the 30S ribosomal subunit. Associates with free 30S ribosomal subunits (but not with 30S subunits that are part of 70S ribosomes or polysomes). Required for efficient processing of 16S rRNA. May interact with the 5'-terminal helix region of 16S rRNA. This is Ribosome-binding factor A from Baumannia cicadellinicola subsp. Homalodisca coagulata.